Here is a 162-residue protein sequence, read N- to C-terminus: MFLSEAGARPRAGEISASERRKWVEVFKACDEDNKGYLSREDFKVAIVMLFGYKPSKIEADAVMSSANPDTSGVSLEGFLNVVQRKKEAQLYRNEIRHIFTAFDVHYRGFLTLEDFKRAFSQVAPKLPSRTVLEVFREADQDSDGHVSFRDFEYAMNHGKAK.

3 EF-hand domains span residues 18–53 (SERRKWVEVFKACDEDNKGYLSREDFKVAIVMLFGY), 91–126 (LYRNEIRHIFTAFDVHYRGFLTLEDFKRAFSQVAPK), and 127–162 (LPSRTVLEVFREADQDSDGHVSFRDFEYAMNHGKAK). The Ca(2+) site is built by D140, D142, D144, H146, and D151.

The protein is EF-hand calcium-binding domain-containing protein 11 (Efcab11) of Rattus norvegicus (Rat).